Reading from the N-terminus, the 259-residue chain is FAD-linked sulfhydryl oxidase (259 aa).

This sequence belongs to the baculoviridae p33 family. Homodimer.

It localises to the host cytoplasm. It is found in the host nucleus. It catalyses the reaction 2 R'C(R)SH + O2 = R'C(R)S-S(R)CR' + H2O2. In terms of biological role, functional FAD-linked sulfhydryl oxidase that is required for infectious budded virion (BV) production and for the formation of enveloped occluded virion (ODV). This Lepidoptera (butterflies and moths) protein is FAD-linked sulfhydryl oxidase (P33).